Here is a 360-residue protein sequence, read N- to C-terminus: MDNYTVAPDDEYDVLILDDYLDNSGPDQVPAPEFLSPQQVLQFCCAVFAVGLLDNVLAVFILVKYKGLKNLGNIYFLNLALSNLCFLLPLPFWAHTAAHGESPGNGTCKVLVGLHSSGLYSEVFSNILLLVQGYRVFSQGRLASIFTTVSCGIVACILAWAMATALSLPESVFYEPRMERQKHKCAFGKPHFLPIEAPLWKYVLTSKMIILVLAFPLLVFIICCRQLRRRQSFRERQYDLHKPALVITGVFLLMWAPYNTVLFLSAFQEHLSLQDEKSSYHLDASVQVTQLVATTHCCVNPLLYLLLDRKAFMRYLRSLFPRCNDIPYQSSGGYQQAPPREGHGRPIELYSNLHQRQDII.

Residues 1 to 42 lie on the Extracellular side of the membrane; sequence MDNYTVAPDDEYDVLILDDYLDNSGPDQVPAPEFLSPQQVLQ. Asn-3 is a glycosylation site (N-linked (GlcNAc...) asparagine). The chain crosses the membrane as a helical span at residues 43–63; sequence FCCAVFAVGLLDNVLAVFILV. Residues 64 to 73 are Cytoplasmic-facing; the sequence is KYKGLKNLGN. A helical transmembrane segment spans residues 74–94; the sequence is IYFLNLALSNLCFLLPLPFWA. At 95 to 109 the chain is on the extracellular side; that stretch reads HTAAHGESPGNGTCK. Asn-105 is a glycosylation site (N-linked (GlcNAc...) asparagine). Cys-108 and Cys-185 are oxidised to a cystine. The chain crosses the membrane as a helical span at residues 110–130; the sequence is VLVGLHSSGLYSEVFSNILLL. Residues 131 to 141 are Cytoplasmic-facing; sequence VQGYRVFSQGR. The chain crosses the membrane as a helical span at residues 142–162; the sequence is LASIFTTVSCGIVACILAWAM. Residues 163 to 202 are Extracellular-facing; the sequence is ATALSLPESVFYEPRMERQKHKCAFGKPHFLPIEAPLWKY. A helical transmembrane segment spans residues 203 to 223; sequence VLTSKMIILVLAFPLLVFIIC. Over 224–243 the chain is Cytoplasmic; the sequence is CRQLRRRQSFRERQYDLHKP. Residues 244–264 form a helical membrane-spanning segment; it reads ALVITGVFLLMWAPYNTVLFL. The Extracellular segment spans residues 265 to 285; it reads SAFQEHLSLQDEKSSYHLDAS. A helical membrane pass occupies residues 286 to 307; it reads VQVTQLVATTHCCVNPLLYLLL. At 308–360 the chain is on the cytoplasmic side; sequence DRKAFMRYLRSLFPRCNDIPYQSSGGYQQAPPREGHGRPIELYSNLHQRQDII.

It belongs to the G-protein coupled receptor 1 family. Expressed in macrophages, astrocytes, in glial cells. Constitutively expressed by mast cells. Detected in bronchial epithelium in OVA-induced airway inflammation. Up-regulated during dendritic cell (DC) maturation.

The protein resides in the cell membrane. Functionally, receptor for CCL19 and chemerin/RARRES2. Does not appear to be a signaling receptor, but may have a role in modulating chemokine-triggered immune responses by capturing and internalizing CCL19 or by presenting RARRES2 ligand to CMKLR1, a functional signaling receptor. Plays a critical role for the development of Th2 responses. This chain is C-C chemokine receptor-like 2 (Ccrl2), found in Mus musculus (Mouse).